The following is a 1083-amino-acid chain: DNA primase (1083 aa).

A CHC2-type zinc finger spans residues 1022 to 1061 (CLRYPHRGGRTAPRTFVSLRVDHHNRLCISLAQQCFATKC).

This sequence belongs to the herpesviridae DNA primase family. Associates with the helicase and the primase-associated factor to form the helicase-primase factor.

It is found in the host nucleus. In terms of biological role, essential component of the helicase/primase complex. Unwinds the DNA at the replication forks and generates single-stranded DNA for both leading and lagging strand synthesis. The primase initiates primer synthesis and thereby produces large amount of short RNA primers on the lagging strand that the polymerase elongates using dNTPs. The sequence is that of DNA primase from Homo sapiens (Human).